The chain runs to 239 residues: Octanoyltransferase (239 aa).

The BPL/LPL catalytic domain maps to 48–236 (DGGDELVWLV…AFEAVFGETT (189 aa)). Substrate-binding positions include 87–94 (RGGEYTYH), 167–169 (ALG), and 180–182 (GLS). The active-site Acyl-thioester intermediate is cysteine 198.

This sequence belongs to the LipB family.

The protein resides in the cytoplasm. The enzyme catalyses octanoyl-[ACP] + L-lysyl-[protein] = N(6)-octanoyl-L-lysyl-[protein] + holo-[ACP] + H(+). Its pathway is protein modification; protein lipoylation via endogenous pathway; protein N(6)-(lipoyl)lysine from octanoyl-[acyl-carrier-protein]: step 1/2. Its function is as follows. Catalyzes the transfer of endogenously produced octanoic acid from octanoyl-acyl-carrier-protein onto the lipoyl domains of lipoate-dependent enzymes. Lipoyl-ACP can also act as a substrate although octanoyl-ACP is likely to be the physiological substrate. This Rhizobium johnstonii (strain DSM 114642 / LMG 32736 / 3841) (Rhizobium leguminosarum bv. viciae) protein is Octanoyltransferase.